We begin with the raw amino-acid sequence, 404 residues long: Type II restriction enzyme EcoRII (404 aa).

Tyrosine 308 is a catalytic residue.

In terms of assembly, homodimer. The cofactor is Mg(2+).

It catalyses the reaction Endonucleolytic cleavage of DNA to give specific double-stranded fragments with terminal 5'-phosphates.. An E and P subtype restriction enzyme that recognizes the double-stranded sequence 5'-CCWGG-3' and cleaves before C-1. The sequence is that of Type II restriction enzyme EcoRII (ecoRIIR) from Escherichia coli.